The sequence spans 389 residues: Na(+)/H(+) antiporter NhaA (389 aa).

Transmembrane regions (helical) follow at residues 17–37 (ILLLVAVALAMLMANSPLAGL), 59–79 (LLLWINDGLMALFFLLIGLEV), 95–115 (SLPTFAAIGGMLVPAGIYLLF), 124–144 (AGWAIPAATDIAFALGIMALL), 154–174 (VFLLALAIIDDLGVIVIIALF), 177–197 (TDLSTISLIIASIAIVGLVAL), 213–233 (LVLWVAVLKSGVHATLAGVII), 261–281 (FLILPVFAFANAGVALGNMSL), 287–307 (PVPVGIALGLMLGKPIGVMLF), 328–348 (IAPVAAMCGIGFTMSMFIASL), and 363–383 (LGTLIGSIIAALIGYFWLSKV).

It belongs to the NhaA Na(+)/H(+) (TC 2.A.33) antiporter family.

It is found in the cell inner membrane. It catalyses the reaction Na(+)(in) + 2 H(+)(out) = Na(+)(out) + 2 H(+)(in). Its function is as follows. Na(+)/H(+) antiporter that extrudes sodium in exchange for external protons. The sequence is that of Na(+)/H(+) antiporter NhaA from Shewanella sp. (strain MR-7).